We begin with the raw amino-acid sequence, 135 residues long: UPF0102 protein Aave_0630 (135 aa).

The tract at residues 1 to 21 (MGILEKKTAGPGGAARKTTTR) is disordered.

Belongs to the UPF0102 family.

The polypeptide is UPF0102 protein Aave_0630 (Paracidovorax citrulli (strain AAC00-1) (Acidovorax citrulli)).